Reading from the N-terminus, the 1444-residue chain is Bromodomain-containing protein 4 (1444 aa).

Disordered stretches follow at residues 1 to 44, 154 to 217, 279 to 362, 492 to 523, 540 to 645, 722 to 986, and 1020 to 1422; these read MGDG…PKRQ, VEIS…PQPI, AAPP…KQQE, PVMA…ERAQ, AALS…GGAA, CLRK…SSQP, and TSLM…RREA. The segment covering 11 to 27 has biased composition (low complexity); that stretch reads SGSSSSQGQPSSQAPSS. One can recognise a Bromo 1 domain in the interval 43-149; sequence RQTNQLQYLL…KVFLTKISEM (107 aa). A compositionally biased stretch (polar residues) spans 186–196; it reads ASPQTRGLSNL. Pro residues predominate over residues 206–216; it reads PQGPPTLPPQP. Positions 303–319 are enriched in polar residues; the sequence is TTTPTANDQLNESSPAE. Positions 327–347 are enriched in basic and acidic residues; that stretch reads PRRDNTRPSKLPKKEAPDSQH. The region spanning 358 to 467 is the Bromo 2 domain; sequence PKQQEQLRYC…DVFEMRFAKM (110 aa). Positions 498 to 511 are enriched in low complexity; sequence SSSDTSSDSSSESE. Residues 498 to 517 are NPS region; that stretch reads SSSDTSSDSSSESESSTDDS. The BID region stretch occupies residues 538-610; the sequence is QLAALSQPQA…SKKLSKKEGG (73 aa). Residues 549–569 are compositionally biased toward basic residues; it reads KPKKKEKEKKEKKKDKHKKKA. The 98-residue stretch at 633–730 folds into the NET domain; that stretch reads DTEEDLGLTG…SCLRKKKKPA (98 aa). Composition is skewed to low complexity over residues 746 to 760, 800 to 823, 919 to 954, and 1036 to 1046; these read GTSS…SSSS, LQPQ…HPSP, LQQS…QQQH, and PSLLQSVQVQS. Polar residues predominate over residues 1090-1109; that stretch reads PLQTAQTQPGQHKVSMPSTK. Low complexity predominate over residues 1110–1121; it reads AQQIIQQQQATQ. A C-terminal (CTD) region region spans residues 1126-1444; it reads RQHKADSYNS…LMAIFEENLF (319 aa). A compositionally biased stretch (polar residues) spans 1151-1163; it reads QIPQYSLVHQSPS. The segment covering 1246 to 1255 has biased composition (basic and acidic residues); that stretch reads QDKEKFKQEP. Low complexity predominate over residues 1282 to 1296; that stretch reads SSTTPSSGLKSSSDS. The span at 1298 to 1357 shows a compositional bias: basic and acidic residues; sequence EQFRRAAREKEEREKALKAQVEQAEKDRLRKEQEKLRGRDEEDSIEPPRRPLEEPRRRQE. The span at 1367-1389 shows a compositional bias: low complexity; that stretch reads QHQTQAQAQTLNPAQSPSASQPT. Over residues 1405–1422 the composition is skewed to basic and acidic residues; sequence QQREMARRREQERRRREA.

The protein belongs to the BET family. In terms of tissue distribution, widely expressed.

Its subcellular location is the nucleus. It is found in the chromosome. Chromatin reader protein that recognizes and binds acetylated histones and plays a key role in transmission of epigenetic memory across cell divisions and transcription regulation. Remains associated with acetylated chromatin throughout the entire cell cycle and provides epigenetic memory for postmitotic G1 gene transcription by preserving acetylated chromatin status and maintaining high-order chromatin structure. During interphase, plays a key role in regulating the transcription of signal-inducible genes by associating with the P-TEFb complex and recruiting it to promoters. This chain is Bromodomain-containing protein 4 (brd4), found in Danio rerio (Zebrafish).